A 203-amino-acid chain; its full sequence is Lectin (203 aa).

Residues 1 to 20 form the signal peptide; it reads MINILHVIAGLALASVGVDA. A propeptide spanning residues 21 to 53 is cleaved from the precursor; that stretch reads RQVGVGADVLHAVENTIDSITGVEASHSALEVG.

As to quaternary structure, monomer.

In terms of biological role, N-acetyl-D-glucosamine-specific lectin. Specifically agglutinates rabbit erythrocytes. The protein is Lectin (UPL1) of Ulva pertusa (Sea lettuce).